Reading from the N-terminus, the 433-residue chain is uncharacterized protein (433 aa).

11 helical membrane passes run 28-48 (FAALGPGILMASAAVGGSHII), 56-76 (IYGWQLAIIIILANLFKYPFF), 102-122 (IWIFFLLNVFATVINTAAVGL), 126-146 (AILTFVLPVQVPVPTLSFIVI), 164-184 (LSKLIMIALTITTVSAVIIAL), 207-227 (ALGFIVALMGWMPAPIEISAI), 250-270 (FNVGYIGTAILALVFLALGAL), 304-324 (GLIAFIAFMCMFGTTITVIDG), 345-365 (SYLNVAITFAALAGLAIIFYF), 375-395 (FAMIASFVSTPVFAYLNLSLV), and 406-426 (LLWLSLIGLMYLTSFTLLFIA).

Its subcellular location is the cell membrane. This is an uncharacterized protein from Pasteurella multocida (strain Pm70).